Consider the following 349-residue polypeptide: Twinfilin-2 (349 aa).

Position 2 is an N-acetylalanine (Ala2). ADF-H domains follow at residues 4-139 (QTGI…KHLS) and 177-313 (GLAF…DEVH). N6-acetyllysine is present on Lys14. Residue Tyr309 is modified to Phosphotyrosine. Residues 322 to 349 (AFAKPKGPGGKRGHKRLIRGPGENGEDS) form a disordered region. The span at 330–339 (GGKRGHKRLI) shows a compositional bias: basic residues. Phosphoserine is present on Ser349.

This sequence belongs to the actin-binding proteins ADF family. Twinfilin subfamily. As to quaternary structure, interacts with G-actin; ADP-actin form and capping protein (CP). Isoform 2 interacts (via its N-terminal ADF-H domain) with G-actin (ADP-bound form) with significantly higher affinity than isoform 1. May also be able to interact with TWF1 and phosphoinositides, PI(4,5)P2. When bound to PI(4,5)P2, it is down-regulated. Interacts with MYO7A. In terms of processing, phosphorylated on both serine/threonine and tyrosine. Isoform 1 is ubiquitously expressed (at protein level). Isoform 2 expression is restricted to heart and skeletal muscle where it is the predominant form.

It is found in the cytoplasm. Its subcellular location is the cytoskeleton. The protein localises to the perinuclear region. It localises to the cell projection. The protein resides in the stereocilium. Actin-binding protein involved in motile and morphological processes. Inhibits actin polymerization, likely by sequestering G-actin. By capping the barbed ends of filaments, it also regulates motility. Seems to play an important role in clathrin-mediated endocytosis and distribution of endocytic organelles. May play a role in regulating the mature length of the middle and short rows of stereocilia. This chain is Twinfilin-2 (Twf2), found in Mus musculus (Mouse).